Here is a 270-residue protein sequence, read N- to C-terminus: Tryptophan synthase alpha chain (270 aa).

Residues E49 and D60 each act as proton acceptor in the active site.

This sequence belongs to the TrpA family. Tetramer of two alpha and two beta chains.

The enzyme catalyses (1S,2R)-1-C-(indol-3-yl)glycerol 3-phosphate + L-serine = D-glyceraldehyde 3-phosphate + L-tryptophan + H2O. Its pathway is amino-acid biosynthesis; L-tryptophan biosynthesis; L-tryptophan from chorismate: step 5/5. The alpha subunit is responsible for the aldol cleavage of indoleglycerol phosphate to indole and glyceraldehyde 3-phosphate. This chain is Tryptophan synthase alpha chain, found in Thermobifida fusca (strain YX).